Consider the following 625-residue polypeptide: Grainyhead-like protein 2 homolog (625 aa).

Residues 1-93 (MSQESDNNKR…KASDSQEDQD (93 aa)) are transcription activation. 2 disordered regions span residues 198–222 (ASHS…SFKD) and 428–452 (EERK…SSDG). One can recognise a Grh/CP2 DB domain in the interval 244–482 (GSGTFQYTLE…DLHSQPVLFI (239 aa)). A compositionally biased stretch (polar residues) spans 440–451 (QASQAQCNNSSD).

Belongs to the grh/CP2 family. Grainyhead subfamily. As to quaternary structure, homodimer, also forms heterodimers with GRHL1 or GRHL3.

It localises to the nucleus. It is found in the membrane. Transcription factor playing an important role in primary neurulation and in epithelial development. Binds directly to the consensus DNA sequence 5'-AACCGGTT-3' acting as an activator and repressor on distinct target genes. During embryogenesis, plays unique and cooperative roles with GRHL3 in establishing distinct zones of primary neurulation. Essential for closure 3 (rostral end of the forebrain), functions cooperatively with GRHL3 in closure 2 (forebrain/midbrain boundary) and posterior neuropore closure. Regulates epithelial morphogenesis acting as a target gene-associated transcriptional activator of apical junctional complex components. Up-regulates of CLDN3 and CLDN4, as well as of RAB25, which increases the CLDN4 protein and its localization at tight junctions. Comprises an essential component of the transcriptional machinery that establishes appropriate expression levels of CLDN4 and CDH1 in different types of epithelia. Exhibits functional redundancy with GRHL3 in epidermal morphogenetic events such as eyelid fusion and epidermal wound repair. In lung, forms a regulatory loop with NKX2-1 that coordinates lung epithelial cell morphogenesis and differentiation. In keratinocytes, plays a role in telomerase activation during cellular proliferation, regulates TERT expression by binding to TERT promoter region and inhibiting DNA methylation at the 5'-CpG island, possibly by interfering with DNMT1 enzyme activity. In addition, impairs keratinocyte differentiation and epidermal function by inhibiting the expression of genes clustered at the epidermal differentiation complex (EDC) as well as GRHL1 and GRHL3 through epigenetic mechanisms. The chain is Grainyhead-like protein 2 homolog (Grhl2) from Mus musculus (Mouse).